Reading from the N-terminus, the 218-residue chain is Large ribosomal subunit protein uL3 (218 aa).

Residues 134–154 form a disordered region; sequence GRASHGNSRSHNVPGSIGMAQ. N5-methylglutamine is present on Gln154.

It belongs to the universal ribosomal protein uL3 family. As to quaternary structure, part of the 50S ribosomal subunit. Forms a cluster with proteins L14 and L19. Post-translationally, methylated by PrmB.

One of the primary rRNA binding proteins, it binds directly near the 3'-end of the 23S rRNA, where it nucleates assembly of the 50S subunit. In Polynucleobacter necessarius subsp. necessarius (strain STIR1), this protein is Large ribosomal subunit protein uL3.